Consider the following 423-residue polypeptide: Serine hydroxymethyltransferase (423 aa).

(6S)-5,6,7,8-tetrahydrofolate-binding positions include L121 and 125 to 127 (GHL). Position 230 is an N6-(pyridoxal phosphate)lysine (K230). Position 355 to 357 (355 to 357 (SPF)) interacts with (6S)-5,6,7,8-tetrahydrofolate.

The protein belongs to the SHMT family. As to quaternary structure, homodimer. The cofactor is pyridoxal 5'-phosphate.

The protein localises to the cytoplasm. The enzyme catalyses (6R)-5,10-methylene-5,6,7,8-tetrahydrofolate + glycine + H2O = (6S)-5,6,7,8-tetrahydrofolate + L-serine. The protein operates within one-carbon metabolism; tetrahydrofolate interconversion. It participates in amino-acid biosynthesis; glycine biosynthesis; glycine from L-serine: step 1/1. Its function is as follows. Catalyzes the reversible interconversion of serine and glycine with tetrahydrofolate (THF) serving as the one-carbon carrier. This reaction serves as the major source of one-carbon groups required for the biosynthesis of purines, thymidylate, methionine, and other important biomolecules. Also exhibits THF-independent aldolase activity toward beta-hydroxyamino acids, producing glycine and aldehydes, via a retro-aldol mechanism. The polypeptide is Serine hydroxymethyltransferase (Hydrogenovibrio crunogenus (strain DSM 25203 / XCL-2) (Thiomicrospira crunogena)).